The chain runs to 574 residues: High-affinity methionine permease (574 aa).

Residues 1–61 lie on the Cytoplasmic side of the membrane; the sequence is MSEGRTFLSQ…TELDQGEKQL (61 aa). Residue lysine 28 forms a Glycyl lysine isopeptide (Lys-Gly) (interchain with G-Cter in ubiquitin) linkage. The chain crosses the membrane as a helical span at residues 62–82; the sequence is GILSCIGLICNRMLGTGVFAV. The Extracellular segment spans residues 83-92; it reads SSTIYTLCGS. A helical transmembrane segment spans residues 93 to 113; sequence VGLALIMWAVGAIIAISGLYV. Over 114–140 the chain is Cytoplasmic; sequence YMEFGTAIPKNGGEKNYLEAIFRKPKF. Residues 141–161 traverse the membrane as a helical segment; that stretch reads FITCMYAAYIFFLGWAAGNSI. At 162-182 the chain is on the extracellular side; sequence NTAIMFLTAADTEVTKWNQRG. Residues 183–203 form a helical membrane-spanning segment; that stretch reads IGVAVVFFAFLINSLNVKIGL. Over 204–207 the chain is Cytoplasmic; sequence YLQN. The helical transmembrane segment at 208-228 threads the bilayer; it reads ILGIFKIGIVLFISITGWVAL. Topologically, residues 229-293 are extracellular; the sequence is GGGLKDGYQS…VRTLKIAGPT (65 aa). The chain crosses the membrane as a helical span at residues 294–314; that stretch reads SMVFLAIIYIFVNIAYFAVVP. Residues 315–340 lie on the Cytoplasmic side of the membrane; the sequence is KDKLISSKLILAADFFDIVFGGQAKR. A helical transmembrane segment spans residues 341–361; it reads AAAALVGLSALGNVLSVIFSQ. Topologically, residues 362–418 are extracellular; the sequence is GRIIQQLGREGVLPFSNFFASSKPFNSPMVGLFQHFIVCTVTILAPPPGDAYLLVQN. The helical transmembrane segment at 419 to 439 threads the bilayer; the sequence is LISYPMNIINFAISAGLLWIY. At 440 to 455 the chain is on the cytoplasmic side; the sequence is WQRRQGKIEWNPPIKA. The helical transmembrane segment at 456–476 threads the bilayer; sequence GVFVTGFFTLSNLYLIIAPYV. Residues 477–490 lie on the Extracellular side of the membrane; sequence PPSNGESVYSSMPY. A helical membrane pass occupies residues 491-511; it reads WIHCVIAWGIFFFGGVYYVVW. Residues 512–574 are Cytoplasmic-facing; that stretch reads AQLLPRWGHY…HYKSEQEKSL (63 aa). Position 552 is a phosphothreonine (threonine 552). Serine 573 carries the post-translational modification Phosphoserine.

It to yeast low affinity methionine permease (MUP3).

The protein resides in the membrane. Its function is as follows. High affinity permease for methionine. This is High-affinity methionine permease (MUP1) from Saccharomyces cerevisiae (strain ATCC 204508 / S288c) (Baker's yeast).